Reading from the N-terminus, the 494-residue chain is Aspartyl/glutamyl-tRNA(Asn/Gln) amidotransferase subunit B (494 aa).

This sequence belongs to the GatB/GatE family. GatB subfamily. Heterotrimer of A, B and C subunits.

It catalyses the reaction L-glutamyl-tRNA(Gln) + L-glutamine + ATP + H2O = L-glutaminyl-tRNA(Gln) + L-glutamate + ADP + phosphate + H(+). The enzyme catalyses L-aspartyl-tRNA(Asn) + L-glutamine + ATP + H2O = L-asparaginyl-tRNA(Asn) + L-glutamate + ADP + phosphate + 2 H(+). Allows the formation of correctly charged Asn-tRNA(Asn) or Gln-tRNA(Gln) through the transamidation of misacylated Asp-tRNA(Asn) or Glu-tRNA(Gln) in organisms which lack either or both of asparaginyl-tRNA or glutaminyl-tRNA synthetases. The reaction takes place in the presence of glutamine and ATP through an activated phospho-Asp-tRNA(Asn) or phospho-Glu-tRNA(Gln). The polypeptide is Aspartyl/glutamyl-tRNA(Asn/Gln) amidotransferase subunit B (Nitrobacter winogradskyi (strain ATCC 25391 / DSM 10237 / CIP 104748 / NCIMB 11846 / Nb-255)).